We begin with the raw amino-acid sequence, 347 residues long: D-alanine--D-alanine ligase (347 aa).

One can recognise an ATP-grasp domain in the interval 133 to 342 (KQAFAQASLP…FPDLVHRLIQ (210 aa)). 169–224 (ETELGYPCFVKPANLGSSVGIAKVRDRAELEAALDQAAALDRRLIIEAAIDNPREV) serves as a coordination point for ATP. Aspartate 296, glutamate 309, and asparagine 311 together coordinate Mg(2+).

It belongs to the D-alanine--D-alanine ligase family. The cofactor is Mg(2+). Requires Mn(2+) as cofactor.

Its subcellular location is the cytoplasm. The catalysed reaction is 2 D-alanine + ATP = D-alanyl-D-alanine + ADP + phosphate + H(+). Its pathway is cell wall biogenesis; peptidoglycan biosynthesis. In terms of biological role, cell wall formation. This chain is D-alanine--D-alanine ligase, found in Synechococcus elongatus (strain ATCC 33912 / PCC 7942 / FACHB-805) (Anacystis nidulans R2).